Here is a 258-residue protein sequence, read N- to C-terminus: Alpha-fibrinogenase albofibrase (258 aa).

A signal peptide spans 1-18; it reads MVLIRVLANLLILQLSYA. Positions 19–24 are excised as a propeptide; the sequence is QKSSEL. Residues 25–249 enclose the Peptidase S1 domain; sequence VVGGDECNIN…YNDWIQSIIA (225 aa). 6 disulfides stabilise this stretch: cysteine 31–cysteine 163, cysteine 50–cysteine 66, cysteine 98–cysteine 256, cysteine 142–cysteine 210, cysteine 174–cysteine 189, and cysteine 200–cysteine 225. Residue asparagine 44 is glycosylated (N-linked (GlcNAc...) asparagine). Active-site charge relay system residues include histidine 65 and aspartate 110. Catalysis depends on serine 204, which acts as the Charge relay system.

Belongs to the peptidase S1 family. Snake venom subfamily. Monomer. Expressed by the venom gland.

It localises to the secreted. Functionally, the recombinant protein has fibrinogenolytic activity against the Aalpha chain (FGA) of fibrinogen. Activates plasminogen (PLG) (is 4-fold less active than urokinase). Has weak thrombin-like enzyme activity. Has enzymatic activity against a trypsin-like substrate (S-3013) and shows a weaker activity on an activated protein C substrate (S-3125). This is Alpha-fibrinogenase albofibrase from Trimeresurus albolabris (White-lipped pit viper).